A 306-amino-acid polypeptide reads, in one-letter code: Ribonuclease Z (306 aa).

Residues His62, His64, Asp66, His67, His138, Asp209, and His267 each contribute to the Zn(2+) site. Asp66 functions as the Proton acceptor in the catalytic mechanism.

The protein belongs to the RNase Z family. Homodimer. The cofactor is Zn(2+).

It catalyses the reaction Endonucleolytic cleavage of RNA, removing extra 3' nucleotides from tRNA precursor, generating 3' termini of tRNAs. A 3'-hydroxy group is left at the tRNA terminus and a 5'-phosphoryl group is left at the trailer molecule.. Its function is as follows. Zinc phosphodiesterase, which displays some tRNA 3'-processing endonuclease activity. Probably involved in tRNA maturation, by removing a 3'-trailer from precursor tRNA. This chain is Ribonuclease Z, found in Archaeoglobus fulgidus (strain ATCC 49558 / DSM 4304 / JCM 9628 / NBRC 100126 / VC-16).